The primary structure comprises 396 residues: 1-deoxy-D-xylulose 5-phosphate reductoisomerase (396 aa).

Thr-10, Gly-11, Ser-12, Ile-13, and Asn-123 together coordinate NADPH. Position 124 (Lys-124) interacts with 1-deoxy-D-xylulose 5-phosphate. Glu-125 lines the NADPH pocket. Asp-149 serves as a coordination point for Mn(2+). 1-deoxy-D-xylulose 5-phosphate contacts are provided by Ser-150, Glu-151, Ser-185, and His-208. Residue Glu-151 participates in Mn(2+) binding. Gly-214 contacts NADPH. Positions 221, 226, 227, and 230 each coordinate 1-deoxy-D-xylulose 5-phosphate. Glu-230 is a binding site for Mn(2+).

This sequence belongs to the DXR family. It depends on Mg(2+) as a cofactor. The cofactor is Mn(2+).

The enzyme catalyses 2-C-methyl-D-erythritol 4-phosphate + NADP(+) = 1-deoxy-D-xylulose 5-phosphate + NADPH + H(+). It participates in isoprenoid biosynthesis; isopentenyl diphosphate biosynthesis via DXP pathway; isopentenyl diphosphate from 1-deoxy-D-xylulose 5-phosphate: step 1/6. In terms of biological role, catalyzes the NADPH-dependent rearrangement and reduction of 1-deoxy-D-xylulose-5-phosphate (DXP) to 2-C-methyl-D-erythritol 4-phosphate (MEP). This chain is 1-deoxy-D-xylulose 5-phosphate reductoisomerase, found in Shewanella baltica (strain OS155 / ATCC BAA-1091).